The sequence spans 269 residues: NAD-capped RNA hydrolase NudC (269 aa).

A substrate-binding site is contributed by Arg81. Zn(2+)-binding residues include Cys110, Cys113, Cys128, and Cys131. Tyr136 provides a ligand contact to substrate. The Nudix hydrolase domain maps to 137 to 260 (PRIFPCIIVA…TIARALIEQT (124 aa)). The a divalent metal cation site is built by Ala170, Glu186, and Glu190. A Nudix box motif is present at residues 171–192 (GFVEVGETLEQCVAREVLEETG). 204-211 (QPWAFPSS) provides a ligand contact to substrate. Residue Glu231 coordinates a divalent metal cation. Ala253 serves as a coordination point for substrate.

The protein belongs to the Nudix hydrolase family. NudC subfamily. Homodimer. Mg(2+) is required as a cofactor. Requires Mn(2+) as cofactor. The cofactor is Zn(2+).

It catalyses the reaction a 5'-end NAD(+)-phospho-ribonucleoside in mRNA + H2O = a 5'-end phospho-adenosine-phospho-ribonucleoside in mRNA + beta-nicotinamide D-ribonucleotide + 2 H(+). The enzyme catalyses NAD(+) + H2O = beta-nicotinamide D-ribonucleotide + AMP + 2 H(+). The catalysed reaction is NADH + H2O = reduced beta-nicotinamide D-ribonucleotide + AMP + 2 H(+). Functionally, mRNA decapping enzyme that specifically removes the nicotinamide adenine dinucleotide (NAD) cap from a subset of mRNAs by hydrolyzing the diphosphate linkage to produce nicotinamide mononucleotide (NMN) and 5' monophosphate mRNA. The NAD-cap is present at the 5'-end of some mRNAs and stabilizes RNA against 5'-processing. Has preference for mRNAs with a 5'-end purine. Catalyzes the hydrolysis of a broad range of dinucleotide pyrophosphates. This Vibrio cholerae serotype O1 (strain ATCC 39315 / El Tor Inaba N16961) protein is NAD-capped RNA hydrolase NudC.